Consider the following 380-residue polypeptide: Cell division protein ZipA (380 aa).

Residues 1-7 (MEDNFRN) lie on the Periplasmic side of the membrane. The chain crosses the membrane as a helical span at residues 8-28 (VLIILSAIVITAIFIHGLWTL). Over 29-380 (RKQKNPYKLK…DRKSRIALVE (352 aa)) the chain is Cytoplasmic.

It belongs to the ZipA family. In terms of assembly, interacts with FtsZ via their C-terminal domains.

It is found in the cell inner membrane. Essential cell division protein that stabilizes the FtsZ protofilaments by cross-linking them and that serves as a cytoplasmic membrane anchor for the Z ring. Also required for the recruitment to the septal ring of downstream cell division proteins. This Colwellia psychrerythraea (strain 34H / ATCC BAA-681) (Vibrio psychroerythus) protein is Cell division protein ZipA.